The sequence spans 159 residues: Transcription elongation factor GreA (159 aa).

Residues 14 to 76 adopt a coiled-coil conformation; that stretch reads IKKLENELEY…QLENMLKNAS (63 aa).

This sequence belongs to the GreA/GreB family.

In terms of biological role, necessary for efficient RNA polymerase transcription elongation past template-encoded arresting sites. The arresting sites in DNA have the property of trapping a certain fraction of elongating RNA polymerases that pass through, resulting in locked ternary complexes. Cleavage of the nascent transcript by cleavage factors such as GreA or GreB allows the resumption of elongation from the new 3'terminus. GreA releases sequences of 2 to 3 nucleotides. The polypeptide is Transcription elongation factor GreA (Clostridium kluyveri (strain NBRC 12016)).